The chain runs to 148 residues: Universal stress protein YxiE (148 aa).

The first 18 residues, 1 to 18 (MFNKMLVAIDGSDMSAKA), serve as a signal peptide directing secretion.

This sequence belongs to the universal stress protein A family.

In Bacillus subtilis (strain 168), this protein is Universal stress protein YxiE (yxiE).